A 308-amino-acid chain; its full sequence is Cytochrome c biogenesis protein CcsA (308 aa).

Helical transmembrane passes span 2–22, 44–64, 71–91, 143–163, 212–232, 239–259, and 273–293; these read IVST…SILI, GMLV…IYLG, LSES…IAYF, MILG…LMVI, VIGL…VWAN, WSWD…AIYL, and AIVA…VNLV.

The protein belongs to the CcmF/CycK/Ccl1/NrfE/CcsA family. In terms of assembly, may interact with Ccs1.

The protein resides in the plastid membrane. Required during biogenesis of c-type cytochromes (cytochrome c6 and cytochrome f) at the step of heme attachment. The polypeptide is Cytochrome c biogenesis protein CcsA (Cuscuta exaltata (Tall dodder)).